The primary structure comprises 341 residues: L-threonine 3-dehydrogenase (341 aa).

Zn(2+) is bound at residue C38. Catalysis depends on charge relay system residues T40 and H43. Zn(2+) is bound by residues H63, E64, C93, C96, C99, and C107. NAD(+)-binding positions include I175, D195, R200, L262–I264, and I286–Y287.

Belongs to the zinc-containing alcohol dehydrogenase family. Homotetramer. Requires Zn(2+) as cofactor.

It localises to the cytoplasm. The catalysed reaction is L-threonine + NAD(+) = (2S)-2-amino-3-oxobutanoate + NADH + H(+). Its pathway is amino-acid degradation; L-threonine degradation via oxydo-reductase pathway; glycine from L-threonine: step 1/2. Functionally, catalyzes the NAD(+)-dependent oxidation of L-threonine to 2-amino-3-ketobutyrate. The chain is L-threonine 3-dehydrogenase from Proteus mirabilis (strain HI4320).